We begin with the raw amino-acid sequence, 262 residues long: 3-methyl-2-oxobutanoate hydroxymethyltransferase (262 aa).

2 residues coordinate Mg(2+): Asp31 and Asp70. 3-methyl-2-oxobutanoate contacts are provided by residues 31–32 (DS), Asp70, and Lys99. Glu101 contributes to the Mg(2+) binding site. Glu168 serves as the catalytic Proton acceptor.

The protein belongs to the PanB family. In terms of assembly, homodecamer; pentamer of dimers. Mg(2+) serves as cofactor.

It is found in the cytoplasm. The enzyme catalyses 3-methyl-2-oxobutanoate + (6R)-5,10-methylene-5,6,7,8-tetrahydrofolate + H2O = 2-dehydropantoate + (6S)-5,6,7,8-tetrahydrofolate. It participates in cofactor biosynthesis; coenzyme A biosynthesis. In terms of biological role, catalyzes the reversible reaction in which hydroxymethyl group from 5,10-methylenetetrahydrofolate is transferred onto alpha-ketoisovalerate to form ketopantoate. This Cenarchaeum symbiosum (strain A) protein is 3-methyl-2-oxobutanoate hydroxymethyltransferase.